A 141-amino-acid polypeptide reads, in one-letter code: HTH-type transcriptional repressor NsrR (141 aa).

The HTH rrf2-type domain occupies glutamine 2 to glutamate 129. The H-T-H motif DNA-binding region spans isoleucine 28 to arginine 51. [2Fe-2S] cluster is bound by residues cysteine 91, cysteine 96, and cysteine 102.

The cofactor is [2Fe-2S] cluster.

Its function is as follows. Nitric oxide-sensitive repressor of genes involved in protecting the cell against nitrosative stress. May require iron for activity. This is HTH-type transcriptional repressor NsrR from Salmonella choleraesuis (strain SC-B67).